Reading from the N-terminus, the 159-residue chain is Abscisic acid and environmental stress-inducible protein (159 aa).

6 tandem repeats follow at residues 38–49 (GGGYNHGGGGYN), 50–61 (GGGYNHGGGGYN), 63–74 (GGGYNHGGGGYN), 77–88 (GGGYNHGGGGYN), 91–102 (GGGYNHGGGGYN), and 105–116 (GGGYNHGGGGYN). Positions 38 to 135 (GGGYNHGGGG…GYNHGGGGCQ (98 aa)) are 7 X 12 AA repeats of G-G-G-Y-N-H-G-G-G-Y-N. The stretch at 124-135 (GGGYNHGGGGCQ) is one 7; approximate repeat.

The protein belongs to the GRP family.

In Medicago sativa subsp. falcata (Sickle medic), this protein is Abscisic acid and environmental stress-inducible protein.